The sequence spans 418 residues: uncharacterized protein (418 aa).

The 152-residue stretch at 7-158 (IDVRPIAEAE…TGLDPRWSGP (152 aa)) folds into the N-acetyltransferase domain. Residues 87–89 (VTV) and 95–100 (RRGLLT) each bind acetyl-CoA. Tyrosine 128 (proton donor) is an active-site residue. Phenylalanine 418 serves as the catalytic Proton acceptor; via carboxylate.

The protein belongs to the acetyltransferase Eis family. Homohexamer; trimer of dimers.

This is an uncharacterized protein from Streptomyces avermitilis (strain ATCC 31267 / DSM 46492 / JCM 5070 / NBRC 14893 / NCIMB 12804 / NRRL 8165 / MA-4680).